A 306-amino-acid chain; its full sequence is Large ribosomal subunit protein uL18 (306 aa).

Belongs to the universal ribosomal protein uL18 family. In terms of assembly, component of the large ribosomal subunit (LSU).

Its subcellular location is the cytoplasm. The protein resides in the nucleus. Its function is as follows. Component of the ribosome, a large ribonucleoprotein complex responsible for the synthesis of proteins in the cell. The small ribosomal subunit (SSU) binds messenger RNAs (mRNAs) and translates the encoded message by selecting cognate aminoacyl-transfer RNA (tRNA) molecules. The large subunit (LSU) contains the ribosomal catalytic site termed the peptidyl transferase center (PTC), which catalyzes the formation of peptide bonds, thereby polymerizing the amino acids delivered by tRNAs into a polypeptide chain. The nascent polypeptides leave the ribosome through a tunnel in the LSU and interact with protein factors that function in enzymatic processing, targeting, and the membrane insertion of nascent chains at the exit of the ribosomal tunnel. In Theileria annulata, this protein is Large ribosomal subunit protein uL18 (RPL5).